The following is a 517-amino-acid chain: Ribose import ATP-binding protein RbsA 2 (517 aa).

2 consecutive ABC transporter domains span residues 10–245 (LRIE…GRSI) and 255–498 (DAGE…VSTH). An ATP-binding site is contributed by 42–49 (GENGAGKS). The disordered stretch occupies residues 497–517 (THTGNSPHSGGTDGTEASRGH).

This sequence belongs to the ABC transporter superfamily. Ribose importer (TC 3.A.1.2.1) family. In terms of assembly, the complex is composed of an ATP-binding protein (RbsA), two transmembrane proteins (RbsC) and a solute-binding protein (RbsB).

It is found in the cell membrane. The catalysed reaction is D-ribose(out) + ATP + H2O = D-ribose(in) + ADP + phosphate + H(+). Part of the ABC transporter complex RbsABC involved in ribose import. Responsible for energy coupling to the transport system. This Streptomyces coelicolor (strain ATCC BAA-471 / A3(2) / M145) protein is Ribose import ATP-binding protein RbsA 2.